The following is a 433-amino-acid chain: Tubulin epsilon and delta complex protein 2 (433 aa).

Disordered stretches follow at residues 45-69 (TGTR…ACTP), 95-169 (TKAG…VGMG), and 326-345 (QPPR…SCGG). Residues 107–120 (KSRSIVTSSGTTAS) show a composition bias toward polar residues. Position 159 is a phosphoserine (serine 159). Over residues 327-339 (PPRPCPVGRPPGA) the composition is skewed to pro residues.

In terms of assembly, interacts with TEDC1. Found in a complex with TEDC1, TEDC2, TUBE1 and TUBD1.

It localises to the cell projection. Its subcellular location is the cilium. The protein localises to the cytoplasm. It is found in the cytoskeleton. The protein resides in the microtubule organizing center. It localises to the centrosome. Its subcellular location is the centriole. In terms of biological role, acts as a positive regulator of ciliary hedgehog signaling. Required for centriole stability. This Homo sapiens (Human) protein is Tubulin epsilon and delta complex protein 2.